A 261-amino-acid polypeptide reads, in one-letter code: Enolase-phosphatase E1 (261 aa).

Asp16 and Glu18 together coordinate Mg(2+). Residues 153–154 and Lys187 contribute to the substrate site; that span reads SS. Asp212 provides a ligand contact to Mg(2+).

Belongs to the HAD-like hydrolase superfamily. MasA/MtnC family. In terms of assembly, monomer. Mg(2+) serves as cofactor.

It localises to the cytoplasm. The protein localises to the nucleus. It carries out the reaction 5-methylsulfanyl-2,3-dioxopentyl phosphate + H2O = 1,2-dihydroxy-5-(methylsulfanyl)pent-1-en-3-one + phosphate. It functions in the pathway amino-acid biosynthesis; L-methionine biosynthesis via salvage pathway; L-methionine from S-methyl-5-thio-alpha-D-ribose 1-phosphate: step 3/6. Its pathway is amino-acid biosynthesis; L-methionine biosynthesis via salvage pathway; L-methionine from S-methyl-5-thio-alpha-D-ribose 1-phosphate: step 4/6. Bifunctional enzyme that catalyzes the enolization of 2,3-diketo-5-methylthiopentyl-1-phosphate (DK-MTP-1-P) into the intermediate 2-hydroxy-3-keto-5-methylthiopentenyl-1-phosphate (HK-MTPenyl-1-P), which is then dephosphorylated to form the acireductone 1,2-dihydroxy-3-keto-5-methylthiopentene (DHK-MTPene). The chain is Enolase-phosphatase E1 from Bos taurus (Bovine).